Here is a 167-residue protein sequence, read N- to C-terminus: General odorant-binding protein 1 (167 aa).

The first 22 residues, 1–22 (MAHTLQTVVLLLGTSILHPILA), serve as a signal peptide directing secretion. 3 disulfide bridges follow: Cys-41–Cys-76, Cys-72–Cys-130, and Cys-119–Cys-139.

Belongs to the PBP/GOBP family. Antenna.

Its function is as follows. Present in the aqueous fluid surrounding olfactory sensory dendrites and are thought to aid in the capture and transport of hydrophobic odorants into and through this fluid. This chain is General odorant-binding protein 1, found in Antheraea pernyi (Chinese oak silk moth).